Here is a 347-residue protein sequence, read N- to C-terminus: Probable RNA methyltransferase Lcho_2507 (347 aa).

The Proton acceptor role is filled by Glu-89. Residues 92–318 (LLPRDGLCVS…TKLRQSAGQD (227 aa)) form the Radical SAM core domain. An intrachain disulfide couples Cys-99 to Cys-323. 3 residues coordinate [4Fe-4S] cluster: Cys-106, Cys-110, and Cys-113. Residues 151–152 (GE), Ser-181, 204–206 (SLH), and Asn-280 each bind S-adenosyl-L-methionine. Catalysis depends on Cys-323, which acts as the S-methylcysteine intermediate.

This sequence belongs to the radical SAM superfamily. RlmN family. It depends on [4Fe-4S] cluster as a cofactor.

The protein resides in the cytoplasm. The protein is Probable RNA methyltransferase Lcho_2507 of Leptothrix cholodnii (strain ATCC 51168 / LMG 8142 / SP-6) (Leptothrix discophora (strain SP-6)).